Here is a 364-residue protein sequence, read N- to C-terminus: tRNA/tmRNA (uracil-C(5))-methyltransferase (364 aa).

Positions 188, 216, 221, 237, and 297 each coordinate S-adenosyl-L-methionine. Catalysis depends on Cys322, which acts as the Nucleophile. The active-site Proton acceptor is Glu356.

Belongs to the class I-like SAM-binding methyltransferase superfamily. RNA M5U methyltransferase family. TrmA subfamily.

The enzyme catalyses uridine(54) in tRNA + S-adenosyl-L-methionine = 5-methyluridine(54) in tRNA + S-adenosyl-L-homocysteine + H(+). The catalysed reaction is uridine(341) in tmRNA + S-adenosyl-L-methionine = 5-methyluridine(341) in tmRNA + S-adenosyl-L-homocysteine + H(+). Functionally, dual-specificity methyltransferase that catalyzes the formation of 5-methyluridine at position 54 (m5U54) in all tRNAs, and that of position 341 (m5U341) in tmRNA (transfer-mRNA). The sequence is that of tRNA/tmRNA (uracil-C(5))-methyltransferase from Colwellia psychrerythraea (strain 34H / ATCC BAA-681) (Vibrio psychroerythus).